The sequence spans 349 residues: 4-hydroxy-3-methylbut-2-en-1-yl diphosphate synthase (flavodoxin) (349 aa).

Positions 264, 267, 299, and 306 each coordinate [4Fe-4S] cluster.

The protein belongs to the IspG family. Requires [4Fe-4S] cluster as cofactor.

The catalysed reaction is (2E)-4-hydroxy-3-methylbut-2-enyl diphosphate + oxidized [flavodoxin] + H2O + 2 H(+) = 2-C-methyl-D-erythritol 2,4-cyclic diphosphate + reduced [flavodoxin]. Its pathway is isoprenoid biosynthesis; isopentenyl diphosphate biosynthesis via DXP pathway; isopentenyl diphosphate from 1-deoxy-D-xylulose 5-phosphate: step 5/6. Functionally, converts 2C-methyl-D-erythritol 2,4-cyclodiphosphate (ME-2,4cPP) into 1-hydroxy-2-methyl-2-(E)-butenyl 4-diphosphate. This chain is 4-hydroxy-3-methylbut-2-en-1-yl diphosphate synthase (flavodoxin), found in Clostridium perfringens (strain 13 / Type A).